The chain runs to 207 residues: Transcription factor DYT1 (207 aa).

The tract at residues 1-38 is disordered; the sequence is MGGGSRFQEPVRMSRRKQVTKEKEEDENFKSPNLEAER. Positions 28 to 77 constitute a bHLH domain; sequence NFKSPNLEAERRRREKLHCRLMALRSHVPIVTNMTKASIVEDAITYIGEL.

Homodimer. As to expression, mostly expressed in anthers, and, to a lower extent, in young inflorescences undergoing meiosis and siliques.

It is found in the nucleus. Its function is as follows. Transcription factor. Involved in the control of tapetum development. Required for male fertility and pollen differentiation, especially during callose deposition. The protein is Transcription factor DYT1 of Arabidopsis thaliana (Mouse-ear cress).